Reading from the N-terminus, the 359-residue chain is Peptide chain release factor 1 (359 aa).

Gln236 carries the post-translational modification N5-methylglutamine.

It belongs to the prokaryotic/mitochondrial release factor family. Methylated by PrmC. Methylation increases the termination efficiency of RF1.

It is found in the cytoplasm. In terms of biological role, peptide chain release factor 1 directs the termination of translation in response to the peptide chain termination codons UAG and UAA. The protein is Peptide chain release factor 1 of Streptococcus pneumoniae serotype 2 (strain D39 / NCTC 7466).